We begin with the raw amino-acid sequence, 337 residues long: Protein RecA (337 aa).

66 to 73 is a binding site for ATP; sequence GPESSGKT.

The protein belongs to the RecA family.

Its subcellular location is the cytoplasm. Functionally, can catalyze the hydrolysis of ATP in the presence of single-stranded DNA, the ATP-dependent uptake of single-stranded DNA by duplex DNA, and the ATP-dependent hybridization of homologous single-stranded DNAs. It interacts with LexA causing its activation and leading to its autocatalytic cleavage. The chain is Protein RecA from Mesomycoplasma hyopneumoniae (strain J / ATCC 25934 / NCTC 10110) (Mycoplasma hyopneumoniae).